Reading from the N-terminus, the 656-residue chain is DNA ligase (656 aa).

NAD(+)-binding positions include D32–D36 and S81–L82. The N6-AMP-lysine intermediate role is filled by K112. Positions 133, 167, and 306 each coordinate NAD(+). Residues C400, C403, C416, and C421 each contribute to the Zn(2+) site. The 80-residue stretch at K577–D656 folds into the BRCT domain.

The protein belongs to the NAD-dependent DNA ligase family. LigA subfamily. It depends on Mg(2+) as a cofactor. The cofactor is Mn(2+).

It carries out the reaction NAD(+) + (deoxyribonucleotide)n-3'-hydroxyl + 5'-phospho-(deoxyribonucleotide)m = (deoxyribonucleotide)n+m + AMP + beta-nicotinamide D-nucleotide.. Its function is as follows. DNA ligase that catalyzes the formation of phosphodiester linkages between 5'-phosphoryl and 3'-hydroxyl groups in double-stranded DNA using NAD as a coenzyme and as the energy source for the reaction. It is essential for DNA replication and repair of damaged DNA. The sequence is that of DNA ligase from Helicobacter pylori (strain J99 / ATCC 700824) (Campylobacter pylori J99).